A 367-amino-acid chain; its full sequence is MEVKSAKELKRISKELQENFLNRWKLLNLEQDKDRLKSLTEKAEDPNLWNNPEEARLVSQKKNELEKKLNPWFTIQQDILDFPDLVDLTLDEKGENGVGELSSEYNRLQEKFEELELLGALKNPEDLKPAFLNIHPGAGGTESQDWAEMLLRMYTRYFEKKGYQYSLIDVQAGDGAGIKNATLHVIGDFAFGFLKGENGVHRLVRISPFDANKRRHTSFVSVHVSPEIDDDIDIKIEEKDIRVDVYRSSGAGGQHVNTTDSAVRITHMPSGIVVACQNERSQIKNRDTAFKMLKARLYELEQEKAKEELEKKSGEKKDITWGSQIRSYVFHPYNLVKDHRTDHETGNVAAVMDGDIEPFILAYLKTL.

Position 254 is an N5-methylglutamine (glutamine 254).

Belongs to the prokaryotic/mitochondrial release factor family. Post-translationally, methylated by PrmC. Methylation increases the termination efficiency of RF2.

It is found in the cytoplasm. Peptide chain release factor 2 directs the termination of translation in response to the peptide chain termination codons UGA and UAA. The protein is Peptide chain release factor 2 of Leptospira interrogans serogroup Icterohaemorrhagiae serovar copenhageni (strain Fiocruz L1-130).